Reading from the N-terminus, the 352-residue chain is Ly6/PLAUR domain-containing protein 3 (352 aa).

Positions 1–32 (MDAARRGDTQPVMWTTRWLLLLPLLLCEGAQA) are cleaved as a signal peptide. One can recognise a UPAR/Ly6 1 domain in the interval 35–128 (CYSCVQKADD…LNLTLRGLNP (94 aa)). Residues N120, N131, N178, and N185 are each glycosylated (N-linked (GlcNAc...) asparagine). The region spanning 142-224 (CYSCMGLSRE…GSCCQGPRCN (83 aa)) is the UPAR/Ly6 2 domain. A compositionally biased stretch (pro residues) spans 236–249 (RIPPLVLLPPPTTP). A disordered region spans residues 236-330 (RIPPLVLLPP…KGGAQIPSKG (95 aa)). Residues 250 to 285 (APSTRTQNSSSTTSTTAPTTATTTIKPTTVQASHTS) show a composition bias toward low complexity. Composition is skewed to basic and acidic residues over residues 286-300 (STHE…EEGS) and 309-320 (HQDRSNMGKFPE). The GPI-anchor amidated glycine moiety is linked to residue G330. Residues 331–352 (GSDALGSWLSAILLTVVAGAML) constitute a propeptide, removed in mature form.

As to quaternary structure, interacts with AGR2 and AGR3. Binds laminin-1 and laminin-5. Interacts with LGALS3. In terms of tissue distribution, found predominantly on the basal layers of squamous epithelium. Expressed in the gravid uterus and on epithelial of the upper gastrointestinal tract. It has been found in tumor lines which metastasize via the lymphatic system.

The protein localises to the cell membrane. Functionally, supports cell migration. May be involved in tumor progression. This Rattus norvegicus (Rat) protein is Ly6/PLAUR domain-containing protein 3 (Lypd3).